Here is a 272-residue protein sequence, read N- to C-terminus: Aquaporin-1 (272 aa).

Over 1-11 the chain is Cytoplasmic; that stretch reads MASEFKKKLFW. The helical transmembrane segment at 12-29 threads the bilayer; the sequence is RAVVAEFLAMILFIFISI. Over 30-48 the chain is Extracellular; that stretch reads GSALGFHYPIKSNQTTGAV. Asn42 carries N-linked (GlcNAc...) asparagine glycosylation. A helical transmembrane segment spans residues 49–67; it reads QDNVKVSLAFGLSIATLAQ. The Cytoplasmic segment spans residues 68 to 70; it reads SVG. Residues 71-84 lie within the membrane without spanning it; it reads HISGAHLNPAVTLG. The short motif at 78-80 is the NPA 1 element; sequence NPA. The Cytoplasmic segment spans residues 85-92; sequence LLLSCQIS. Residues 93-111 form a helical membrane-spanning segment; sequence ILRAIMYIIAQCVGAIVAT. Residues 112-135 lie on the Extracellular side of the membrane; the sequence is VILSGITSSLPDNSLGLNALAPGV. The helical transmembrane segment at 136–155 threads the bilayer; the sequence is NSGQGLGIEIIGTLQLVLCV. Over 156-166 the chain is Cytoplasmic; that stretch reads LATTDRRRRRD. A helical transmembrane segment spans residues 167–184; the sequence is LGDSGPLAIGFSVALGHL. Residues 185 to 189 are Extracellular-facing; it reads LAIDY. Residues 190–202 lie within the membrane without spanning it; the sequence is TGCGINPARSFGS. The NPA 2 signature appears at 195–197; that stretch reads NPA. At 203–209 the chain is on the extracellular side; it reads SVITHNF. A helical membrane pass occupies residues 210–227; the sequence is QDHWIFWVGPFIGAALAV. Residues 228–272 lie on the Cytoplasmic side of the membrane; it reads LIYDFILAPRSSDLTDRVKVWTSGQVEEYDLDADDINSRVEMKPK. A Phosphoserine modification is found at Ser250. Tyr256 bears the Phosphotyrosine mark. Phosphoserine is present on Ser265.

Belongs to the MIP/aquaporin (TC 1.A.8) family. As to quaternary structure, homotetramer; each monomer provides an independent water pore. Component of the ankyrin-1 complex in the erythrocyte, composed of ANK1, RHCE, RHAG, SLC4A1, EPB42, GYPA, GYPB and AQP1. Interacts with EPHB2; involved in endolymph production in the inner ear. Identified in a complex with STOM. Interacts (via the N-terminal) with ANK1 (via ANK 1-5 repeats). Interacts (via the C-terminal) with EPB42. Detected in fetal kidney (at protein level). Detected in fetal kidney.

It is found in the cell membrane. It carries out the reaction H2O(in) = H2O(out). It catalyses the reaction nitric oxide(out) = nitric oxide(in). The catalysed reaction is CO2(out) = CO2(in). The enzyme catalyses glycerol(in) = glycerol(out). It carries out the reaction H2O2(out) = H2O2(in). It catalyses the reaction K(+)(in) = K(+)(out). The catalysed reaction is Na(+)(in) = Na(+)(out). Its function is as follows. Forms a water channel that facilitates the transport of water across cell membranes, playing a crucial role in water homeostasis in various tissues. Could also be permeable to small solutes including hydrogen peroxide, glycerol and gases such as amonnia (NH3), nitric oxide (NO) and carbon dioxide (CO2). Recruited to the ankyrin-1 complex, a multiprotein complex of the erythrocyte membrane, it could be part of a CO2 metabolon, linking facilitated diffusion of CO2 across the membrane, anion exchange of Cl(-)/HCO3(-) and interconversion of dissolved CO2 and carbonic acid in the cytosol. In vitro, it shows non-selective gated cation channel activity and may be permeable to cations like K(+) and Na(+) in vivo. The protein is Aquaporin-1 of Ovis aries (Sheep).